The sequence spans 205 residues: ATP synthase subunit b (205 aa).

A helical membrane pass occupies residues 51–69 (FAWRCLDFAVLLAIVVWAL).

This sequence belongs to the ATPase B chain family. As to quaternary structure, F-type ATPases have 2 components, F(1) - the catalytic core - and F(0) - the membrane proton channel. F(1) has five subunits: alpha(3), beta(3), gamma(1), delta(1), epsilon(1). F(0) has three main subunits: a(1), b(2) and c(10-14). The alpha and beta chains form an alternating ring which encloses part of the gamma chain. F(1) is attached to F(0) by a central stalk formed by the gamma and epsilon chains, while a peripheral stalk is formed by the delta and b chains.

It localises to the cell inner membrane. In terms of biological role, f(1)F(0) ATP synthase produces ATP from ADP in the presence of a proton or sodium gradient. F-type ATPases consist of two structural domains, F(1) containing the extramembraneous catalytic core and F(0) containing the membrane proton channel, linked together by a central stalk and a peripheral stalk. During catalysis, ATP synthesis in the catalytic domain of F(1) is coupled via a rotary mechanism of the central stalk subunits to proton translocation. Component of the F(0) channel, it forms part of the peripheral stalk, linking F(1) to F(0). This is ATP synthase subunit b from Geotalea uraniireducens (strain Rf4) (Geobacter uraniireducens).